The following is a 540-amino-acid chain: 2,3-bisphosphoglycerate-independent phosphoglycerate mutase (540 aa).

The Mn(2+) site is built by aspartate 25 and serine 75. Serine 75 (phosphoserine intermediate) is an active-site residue. Substrate-binding positions include histidine 136, 166-167, arginine 198, arginine 204, 269-272, and lysine 342; these read RD and RPDR. 5 residues coordinate Mn(2+): aspartate 409, histidine 413, aspartate 450, histidine 451, and histidine 468.

The protein belongs to the BPG-independent phosphoglycerate mutase family. As to quaternary structure, monomer. The cofactor is Mn(2+).

It catalyses the reaction (2R)-2-phosphoglycerate = (2R)-3-phosphoglycerate. The protein operates within carbohydrate degradation; glycolysis; pyruvate from D-glyceraldehyde 3-phosphate: step 3/5. Its function is as follows. Catalyzes the interconversion of 2-phosphoglycerate and 3-phosphoglycerate. This Prochlorococcus marinus subsp. pastoris (strain CCMP1986 / NIES-2087 / MED4) protein is 2,3-bisphosphoglycerate-independent phosphoglycerate mutase.